The sequence spans 262 residues: tRNA pseudouridine synthase A (262 aa).

Aspartate 51 acts as the Nucleophile in catalysis. Substrate is bound at residue tyrosine 109.

The protein belongs to the tRNA pseudouridine synthase TruA family. As to quaternary structure, homodimer.

It carries out the reaction uridine(38/39/40) in tRNA = pseudouridine(38/39/40) in tRNA. Formation of pseudouridine at positions 38, 39 and 40 in the anticodon stem and loop of transfer RNAs. The protein is tRNA pseudouridine synthase A of Actinobacillus pleuropneumoniae serotype 3 (strain JL03).